Consider the following 515-residue polypeptide: Lysine--tRNA ligase (515 aa).

Residues Glu-422 and Glu-429 each coordinate Mg(2+).

The protein belongs to the class-II aminoacyl-tRNA synthetase family. As to quaternary structure, homodimer. Requires Mg(2+) as cofactor.

It localises to the cytoplasm. The catalysed reaction is tRNA(Lys) + L-lysine + ATP = L-lysyl-tRNA(Lys) + AMP + diphosphate. The protein is Lysine--tRNA ligase of Clostridium acetobutylicum (strain ATCC 824 / DSM 792 / JCM 1419 / IAM 19013 / LMG 5710 / NBRC 13948 / NRRL B-527 / VKM B-1787 / 2291 / W).